The sequence spans 97 residues: Sorbitol dehydrogenase (97 aa).

Residue Cys-44 coordinates Zn(2+). Tyr-50 is a substrate binding site. Zn(2+) contacts are provided by His-69 and Glu-70.

Belongs to the zinc-containing alcohol dehydrogenase family. As to quaternary structure, homotetramer. The cofactor is Zn(2+).

It is found in the mitochondrion membrane. The protein localises to the cell projection. Its subcellular location is the cilium. The protein resides in the flagellum. It carries out the reaction xylitol + NAD(+) = D-xylulose + NADH + H(+). It catalyses the reaction L-iditol + NAD(+) = keto-L-sorbose + NADH + H(+). The catalysed reaction is keto-D-fructose + NADH + H(+) = D-sorbitol + NAD(+). Its function is as follows. Polyol dehydrogenase that catalyzes the reversible NAD(+)-dependent oxidation of various sugar alcohols. Is active with xylitol, L-iditol and D-sorbitol (D-glucitol) as substrates, leading to the C2-oxidized products D-xylulose, L-sorbose and D-fructose, respectively. Is a key enzyme in the polyol pathway that interconverts glucose and fructose via sorbitol, which constitutes an important alternate route for glucose metabolism. May play a role in sperm motility by using sorbitol as an alternative energy source for sperm motility. This Sus scrofa (Pig) protein is Sorbitol dehydrogenase (SORD).